The primary structure comprises 455 residues: uncharacterized protein (455 aa).

11 helical membrane-spanning segments follow: residues 26–46 (FGPG…QLLI), 53–73 (GAWG…ISIG), 77–97 (LGVM…RSTA), 111–131 (WVVA…LAVI), 146–166 (ALRA…TGVW), 191–211 (AAGV…SLVV), 232–252 (LTVL…AIAV), 256–276 (AHIG…IPAL), 278–298 (ILAA…LIVG), 323–343 (LLVA…GGGG), and 357–377 (ALVL…VVIA). Positions 384-455 (PKRLRPAPPV…LSDEPPPRAD (72 aa)) are disordered.

It is found in the cell membrane. This is an uncharacterized protein from Mycobacterium tuberculosis (strain CDC 1551 / Oshkosh).